Reading from the N-terminus, the 359-residue chain is Phosphoserine aminotransferase (359 aa).

Arg-41 is a binding site for L-glutamate. Pyridoxal 5'-phosphate is bound by residues 75 to 76 (AS), Trp-101, Thr-151, Asp-171, and Gln-194. The residue at position 195 (Lys-195) is an N6-(pyridoxal phosphate)lysine. 236–237 (NT) lines the pyridoxal 5'-phosphate pocket.

It belongs to the class-V pyridoxal-phosphate-dependent aminotransferase family. SerC subfamily. In terms of assembly, homodimer. Requires pyridoxal 5'-phosphate as cofactor.

It localises to the cytoplasm. The catalysed reaction is O-phospho-L-serine + 2-oxoglutarate = 3-phosphooxypyruvate + L-glutamate. It catalyses the reaction 4-(phosphooxy)-L-threonine + 2-oxoglutarate = (R)-3-hydroxy-2-oxo-4-phosphooxybutanoate + L-glutamate. It participates in amino-acid biosynthesis; L-serine biosynthesis; L-serine from 3-phospho-D-glycerate: step 2/3. It functions in the pathway cofactor biosynthesis; pyridoxine 5'-phosphate biosynthesis; pyridoxine 5'-phosphate from D-erythrose 4-phosphate: step 3/5. Catalyzes the reversible conversion of 3-phosphohydroxypyruvate to phosphoserine and of 3-hydroxy-2-oxo-4-phosphonooxybutanoate to phosphohydroxythreonine. In Thiobacillus denitrificans (strain ATCC 25259 / T1), this protein is Phosphoserine aminotransferase.